The sequence spans 64 residues: Large ribosomal subunit protein bL32 (64 aa).

A disordered region spans residues 1-20; it reads MALPKYKTSRANTHSRRANW.

The protein belongs to the bacterial ribosomal protein bL32 family.

The polypeptide is Large ribosomal subunit protein bL32 (Bifidobacterium adolescentis (strain ATCC 15703 / DSM 20083 / NCTC 11814 / E194a)).